We begin with the raw amino-acid sequence, 228 residues long: MCKGLQVAIDGPASAGKSTVAKLVAKKFNYVYCDTGAMYRAVTLAVLNQGIDPKDDKKVAEIARQIKIDFEPGEIEQRVFLDGKEVTHDIRLPKVAANVSAVAAVPAVREEMTKQQRQIAENGGIVMDGRDIGTTVLPQAPVKIFMVASAYERARRRYAENQAKGINTTSLEELQKAIELRDKKDSTRKVSPLTQAPDAIKLDTTNMTIDEVVSEISKIIKKTQDELA.

11 to 19 (GPASAGKST) contributes to the ATP binding site.

It belongs to the cytidylate kinase family. Type 1 subfamily.

It is found in the cytoplasm. It catalyses the reaction CMP + ATP = CDP + ADP. The enzyme catalyses dCMP + ATP = dCDP + ADP. The polypeptide is Cytidylate kinase (Limosilactobacillus reuteri (strain DSM 20016) (Lactobacillus reuteri)).